The sequence spans 245 residues: 3-deoxy-manno-octulosonate cytidylyltransferase (245 aa).

It belongs to the KdsB family.

The protein localises to the cytoplasm. The catalysed reaction is 3-deoxy-alpha-D-manno-oct-2-ulosonate + CTP = CMP-3-deoxy-beta-D-manno-octulosonate + diphosphate. It functions in the pathway nucleotide-sugar biosynthesis; CMP-3-deoxy-D-manno-octulosonate biosynthesis; CMP-3-deoxy-D-manno-octulosonate from 3-deoxy-D-manno-octulosonate and CTP: step 1/1. Its pathway is bacterial outer membrane biogenesis; lipopolysaccharide biosynthesis. Its function is as follows. Activates KDO (a required 8-carbon sugar) for incorporation into bacterial lipopolysaccharide in Gram-negative bacteria. In Acidobacterium capsulatum (strain ATCC 51196 / DSM 11244 / BCRC 80197 / JCM 7670 / NBRC 15755 / NCIMB 13165 / 161), this protein is 3-deoxy-manno-octulosonate cytidylyltransferase.